The chain runs to 369 residues: MSKLQLRAVVADRRLDVEFSVSAGEVLAVLGPNGAGKSTALHVIAGLLRPDAGLVRLGDRVLTDTEAGVNVATHDRRVGLLLQDPLLFPHLSVAKNVAFGPQCRRGMFGSGRARTRASALRWLREVNAEQFADRKPRQLSGGQAQRVAIARALAAEPDVLLLDEPLTGLDVAAAAGIRSVLRSVVARSGCAVVLTTHDLLDVFTLADRVLVLESGTIAEIGPVADVLTAPRSRFGARIAGVNLVNGTIGPDGSLRTQSGAHWYGTPVQDLPTGHEAIAVFPPTAVAVYPEPPHGSPRNIVGLTVAEVDTRGPTVLVRGHDQPGGAPGLAACITVDAATELRVAPGSRVWFSVKAQEVALHPAPHQHASS.

Residues 4 to 239 (LQLRAVVADR…PRSRFGARIA (236 aa)) enclose the ABC transporter domain. ATP is bound at residue 31-38 (GPNGAGKS). The region spanning 293-361 (HGSPRNIVGL…VKAQEVALHP (69 aa)) is the Mop domain.

It belongs to the ABC transporter superfamily. Molybdate importer (TC 3.A.1.8) family. In terms of assembly, the complex is composed of two ATP-binding proteins (ModC), two transmembrane proteins (ModB) and a solute-binding protein (ModA).

It is found in the cell membrane. It carries out the reaction molybdate(out) + ATP + H2O = molybdate(in) + ADP + phosphate + H(+). Its function is as follows. Part of the ABC transporter complex ModABC involved in molybdenum import. Responsible for energy coupling to the transport system. This Mycobacterium tuberculosis (strain CDC 1551 / Oshkosh) protein is Molybdenum import ATP-binding protein ModC.